The chain runs to 555 residues: Glutamine--tRNA ligase (555 aa).

The short motif at 34-44 (PEPNGYLHIGH) is the 'HIGH' region element. ATP contacts are provided by residues 35 to 37 (EPN) and 41 to 47 (HIGHAKS). Residues Asp-67 and Tyr-212 each coordinate L-glutamine. ATP is bound by residues Thr-231, 261-262 (RL), and 269-271 (MSK). Positions 268 to 272 (IMSKR) match the 'KMSKS' region motif.

The protein belongs to the class-I aminoacyl-tRNA synthetase family. As to quaternary structure, monomer.

The protein localises to the cytoplasm. It carries out the reaction tRNA(Gln) + L-glutamine + ATP = L-glutaminyl-tRNA(Gln) + AMP + diphosphate. This Yersinia pseudotuberculosis serotype O:3 (strain YPIII) protein is Glutamine--tRNA ligase.